We begin with the raw amino-acid sequence, 161 residues long: Regulator of ribonuclease activity A (161 aa).

The protein belongs to the RraA family. In terms of assembly, homotrimer. Binds to both RNA-binding sites in the C-terminal region of Rne and to RhlB.

The protein localises to the cytoplasm. Its function is as follows. Globally modulates RNA abundance by binding to RNase E (Rne) and regulating its endonucleolytic activity. Can modulate Rne action in a substrate-dependent manner by altering the composition of the degradosome. Modulates RNA-binding and helicase activities of the degradosome. The protein is Regulator of ribonuclease activity A of Photobacterium profundum (strain SS9).